A 53-amino-acid chain; its full sequence is UPF0391 membrane protein ESA_03375 (53 aa).

The next 2 membrane-spanning stretches (helical) occupy residues 4-24 (WGII…GGLA) and 28-48 (AGAA…SLFM).

This sequence belongs to the UPF0391 family.

Its subcellular location is the cell membrane. The polypeptide is UPF0391 membrane protein ESA_03375 (Cronobacter sakazakii (strain ATCC BAA-894) (Enterobacter sakazakii)).